We begin with the raw amino-acid sequence, 1132 residues long: Error-prone DNA polymerase (1132 aa).

The protein belongs to the DNA polymerase type-C family. DnaE2 subfamily.

The protein resides in the cytoplasm. The enzyme catalyses DNA(n) + a 2'-deoxyribonucleoside 5'-triphosphate = DNA(n+1) + diphosphate. Functionally, DNA polymerase involved in damage-induced mutagenesis and translesion synthesis (TLS). It is not the major replicative DNA polymerase. This chain is Error-prone DNA polymerase, found in Anaeromyxobacter dehalogenans (strain 2CP-C).